Here is a 114-residue protein sequence, read N- to C-terminus: Cytochrome c2 (114 aa).

Gln1 carries the post-translational modification Pyrrolidone carboxylic acid. Heme c-binding residues include Cys13, Cys16, His17, and Met93.

The protein belongs to the cytochrome c family. Binds 1 heme c group covalently per subunit.

Cytochrome c2 is found mainly in purple, non-sulfur, photosynthetic bacteria where it functions as the electron donor to the oxidized bacteriochlorophyll in the photophosphorylation pathway. However, it may also have a role in the respiratory chain and is found in some non-photosynthetic bacteria. This chain is Cytochrome c2 (cycA), found in Rhodopseudomonas palustris.